A 458-amino-acid chain; its full sequence is Glycine--tRNA ligase (458 aa).

Residues arginine 97 and glutamate 171 each coordinate substrate. ATP-binding positions include 203–205 (RNE), 213–218 (FRTREF), 287–288 (EL), and 331–334 (GADR). 218 to 222 (FEQME) is a binding site for substrate. Substrate is bound at residue 327-331 (EPSLG).

It belongs to the class-II aminoacyl-tRNA synthetase family. In terms of assembly, homodimer.

It localises to the cytoplasm. It carries out the reaction tRNA(Gly) + glycine + ATP = glycyl-tRNA(Gly) + AMP + diphosphate. Its function is as follows. Catalyzes the attachment of glycine to tRNA(Gly). The chain is Glycine--tRNA ligase from Bacillus thuringiensis subsp. konkukian (strain 97-27).